The primary structure comprises 119 residues: Beta-2-microglobulin (119 aa).

A signal peptide spans 1-20; that stretch reads MARFVVVPLLVLLSLFGLEA. An Ig-like C1-type domain is found at 25 to 114; it reads PKIQVYSRYP…VTFSTPKTVK (90 aa). Cysteine 45 and cysteine 100 are joined by a disulfide.

The protein belongs to the beta-2-microglobulin family. As to quaternary structure, heterodimer of an alpha chain and a beta chain. Beta-2-microglobulin is the beta-chain of major histocompatibility complex class I molecules.

The protein localises to the secreted. Component of the class I major histocompatibility complex (MHC). Involved in the presentation of peptide antigens to the immune system. The polypeptide is Beta-2-microglobulin (B2M) (Saguinus bicolor bicolor (Pied bare-faced tamarin)).